The chain runs to 385 residues: WD repeat-containing protein 74 (385 aa).

WD repeat units follow at residues Arg40 to Gln80, Cys83 to Asp122, Arg128 to Phe168, Asp179 to Val220, Thr224 to Lys266, and Gly267 to His306. Residue Ser214 is modified to Phosphoserine. Lys311 bears the N6-methyllysine mark. The segment at Ser320 to Pro385 is required for nucleolar and nuclear location. Disordered regions lie at residues Asp323–Thr345 and Leu360–Pro385. At Ser361 the chain carries Phosphoserine. The span at Thr372 to Pro385 shows a compositional bias: basic residues.

Isoform 1 interacts (through WDR repeats) with NVL; the interaction is independent of RNA or pre-60S ribosome particles. Isoform 2 does not interact with NVL. Interacts with MTREX; the interaction dissociation in a late stage of rRNA synthesis is required for appropriate maturation of pre-60S particles and depends on the ATPase activity of NVL.

Its subcellular location is the nucleus. The protein resides in the nucleolus. Functionally, regulatory protein of the MTREX-exosome complex involved in the synthesis of the 60S ribosomal subunit. Participates in an early cleavage of the pre-rRNA processing pathway in cooperation with NVL. Required for blastocyst formation, is necessary for RNA transcription, processing and/or stability during preimplantation development. The protein is WD repeat-containing protein 74 (WDR74) of Homo sapiens (Human).